A 516-amino-acid polypeptide reads, in one-letter code: Phosphatidylserine decarboxylase proenzyme 2, mitochondrial (516 aa).

A mitochondrion-targeting transit peptide spans 1–21 (MRPRQRFRRFHPRWSKVNLRG). Residues 22-33 (FGGVGALKGVKA) lie on the Mitochondrial matrix side of the membrane. Residues 34–52 (LNGMNVRVSMRLKWISNRI) form a helical membrane-spanning segment. Residues 53 to 516 (HRIRRSRRLG…GQYVRVGEAL (464 aa)) are Mitochondrial intermembrane-facing. Active-site charge relay system; for autoendoproteolytic cleavage activity residues include D159, H373, and S488. Catalysis depends on S488, which acts as the Schiff-base intermediate with substrate; via pyruvic acid; for decarboxylase activity. Pyruvic acid (Ser); by autocatalysis is present on S488.

This sequence belongs to the phosphatidylserine decarboxylase family. PSD-B subfamily. Eukaryotic type I sub-subfamily. As to quaternary structure, heterodimer of a large membrane-associated beta subunit and a small pyruvoyl-containing alpha subunit. It depends on pyruvate as a cofactor. Is synthesized initially as an inactive proenzyme. Formation of the active enzyme involves a self-maturation process in which the active site pyruvoyl group is generated from an internal serine residue via an autocatalytic post-translational modification. Two non-identical subunits are generated from the proenzyme in this reaction, and the pyruvate is formed at the N-terminus of the alpha chain, which is derived from the carboxyl end of the proenzyme. The autoendoproteolytic cleavage occurs by a canonical serine protease mechanism, in which the side chain hydroxyl group of the serine supplies its oxygen atom to form the C-terminus of the beta chain, while the remainder of the serine residue undergoes an oxidative deamination to produce ammonia and the pyruvoyl prosthetic group on the alpha chain. During this reaction, the Ser that is part of the protease active site of the proenzyme becomes the pyruvoyl prosthetic group, which constitutes an essential element of the active site of the mature decarboxylase.

The protein resides in the mitochondrion. The protein localises to the mitochondrion inner membrane. It is found in the nucleus envelope. It localises to the lipid droplet. Its subcellular location is the endoplasmic reticulum membrane. It catalyses the reaction a 1,2-diacyl-sn-glycero-3-phospho-L-serine + H(+) = a 1,2-diacyl-sn-glycero-3-phosphoethanolamine + CO2. Its pathway is phospholipid metabolism; phosphatidylethanolamine biosynthesis; phosphatidylethanolamine from CDP-diacylglycerol: step 2/2. In terms of biological role, catalyzes the formation of phosphatidylethanolamine (PtdEtn) from phosphatidylserine (PtdSer). Plays a central role in phospholipid metabolism and in the interorganelle trafficking of phosphatidylserine. Together with psd1 and psd3, responsible for the majority of phosphatidylethanolamine synthesis. Plays a role in lipid droplet biogenesis at the endoplasmic reticulum membrane. This Schizosaccharomyces pombe (strain 972 / ATCC 24843) (Fission yeast) protein is Phosphatidylserine decarboxylase proenzyme 2, mitochondrial.